The chain runs to 356 residues: Phosphoserine aminotransferase (356 aa).

Residue Arg41 participates in L-glutamate binding. Residues 76–77 (AS), Trp102, Thr150, Asp169, and Gln192 each bind pyridoxal 5'-phosphate. Position 193 is an N6-(pyridoxal phosphate)lysine (Lys193). 234 to 235 (NT) lines the pyridoxal 5'-phosphate pocket.

Belongs to the class-V pyridoxal-phosphate-dependent aminotransferase family. SerC subfamily. As to quaternary structure, homodimer. Pyridoxal 5'-phosphate serves as cofactor.

Its subcellular location is the cytoplasm. It carries out the reaction O-phospho-L-serine + 2-oxoglutarate = 3-phosphooxypyruvate + L-glutamate. The enzyme catalyses 4-(phosphooxy)-L-threonine + 2-oxoglutarate = (R)-3-hydroxy-2-oxo-4-phosphooxybutanoate + L-glutamate. Its pathway is amino-acid biosynthesis; L-serine biosynthesis; L-serine from 3-phospho-D-glycerate: step 2/3. It participates in cofactor biosynthesis; pyridoxine 5'-phosphate biosynthesis; pyridoxine 5'-phosphate from D-erythrose 4-phosphate: step 3/5. Its function is as follows. Catalyzes the reversible conversion of 3-phosphohydroxypyruvate to phosphoserine and of 3-hydroxy-2-oxo-4-phosphonooxybutanoate to phosphohydroxythreonine. The chain is Phosphoserine aminotransferase from Flavobacterium psychrophilum (strain ATCC 49511 / DSM 21280 / CIP 103535 / JIP02/86).